Consider the following 107-residue polypeptide: Ferredoxin-6 (107 aa).

The 105-residue stretch at 2-106 (AKIIFIEHNG…GLVVHLPEKQ (105 aa)) folds into the 2Fe-2S ferredoxin-type domain. The [2Fe-2S] cluster site is built by Cys-40, Cys-46, Cys-49, and Cys-87.

The protein belongs to the adrenodoxin/putidaredoxin family. [2Fe-2S] cluster is required as a cofactor.

Its function is as follows. Ferredoxins are small electron carrier proteins that participate in various redox reactions. FdVI is an essential protein required for growth of R.capsulatus. May be involved in Fe-S cluster assembly. The chain is Ferredoxin-6 from Rhodobacter capsulatus (Rhodopseudomonas capsulata).